Reading from the N-terminus, the 243-residue chain is Exosome complex component Rrp41 (243 aa).

Belongs to the RNase PH family. Rrp41 subfamily. In terms of assembly, component of the archaeal exosome complex. Forms a hexameric ring-like arrangement composed of 3 Rrp41-Rrp42 heterodimers. The hexameric ring associates with a trimer of Rrp4 and/or Csl4 subunits.

Its subcellular location is the cytoplasm. Catalytic component of the exosome, which is a complex involved in RNA degradation. Has 3'-&gt;5' exoribonuclease activity. Can also synthesize heteromeric RNA-tails. This is Exosome complex component Rrp41 from Sulfurisphaera tokodaii (strain DSM 16993 / JCM 10545 / NBRC 100140 / 7) (Sulfolobus tokodaii).